Here is a 78-residue protein sequence, read N- to C-terminus: Beta-defensin 105A (78 aa).

Positions 1-27 (MALIRKTFYFLFAVFFILVQLPSGCQA) are cleaved as a signal peptide. 3 disulfide bridges follow: cysteine 46-cysteine 74, cysteine 53-cysteine 67, and cysteine 57-cysteine 73.

The protein belongs to the beta-defensin family.

It localises to the secreted. In terms of biological role, has antimicrobial activity. The chain is Beta-defensin 105A (DEFB105A) from Hylobates lar (Lar gibbon).